A 65-amino-acid polypeptide reads, in one-letter code: MPKMKSHRGAAKRFKKTGTGKLKRAKAFKSHILTKKSPKTKRNLRKGGYVSKSQEKVMKKLLPYL.

The disordered stretch occupies residues 1-25 (MPKMKSHRGAAKRFKKTGTGKLKRA).

It belongs to the bacterial ribosomal protein bL35 family.

This is Large ribosomal subunit protein bL35 from Clostridium botulinum (strain Eklund 17B / Type B).